A 641-amino-acid polypeptide reads, in one-letter code: MGKIIGIDLGTTNSCVSIMDGGKARVIENSEGDRTTPSIVAYTKDGEVLVGASAKRQAVTNPKNTFYAVKRLIGRKFTDAEVQKDISHVPYGILAHDNGDAWVQTSDAKRMAPQEISARVLEKMKKTAEDYLGEKVTEAVITVPAYFNDSQRQATKDAGRIAGLDVKRIINEPTAAALAYGLDKKGGDRKIAVYDLGGGTFDVSIIEIAEVDGEKQFEVLATNGDTFLGGEDFDNRVIEYLVDEFNKDQGIDLRKDPLALQRLKDAAERAKIELSSSQQTEVNLPYVTADASGPKHLNIKLTRAKLEALVEDLVKKSIEPCRTALNDAGLRASDINEVILVGGQTRMPKVQQAVADFFGKEPRKDVNPDEAVAVGAAIQGGVLAGDVKDVLLLDVTPLSLGIETMGGVFTKIIEKNTTIPTKASQTFSTAEDNQSAVTVHVLQGEREQARFNKSLAKFDLSGIEPAPRGMPQVEVSFDIDANGILHVSAKDKKTNKEQKVEIKAGSGLSDEEIQRMVADAEANREEDKKFHELVQARNQADGLIHATRTAITEHGSKVGGDVIGKVEAALSDLETAVKGDDKAQIEARTKTLEEAGQSLYAAAAAAEQGGSADAASGNAQASKAADDVVDAEFTEVKDDKK.

Thr-200 is modified (phosphothreonine; by autocatalysis). The span at 605 to 623 (AAEQGGSADAASGNAQASK) shows a compositional bias: low complexity. The segment at 605 to 628 (AAEQGGSADAASGNAQASKAADDV) is disordered.

This sequence belongs to the heat shock protein 70 family.

Functionally, acts as a chaperone. In Xanthomonas oryzae pv. oryzae (strain KACC10331 / KXO85), this protein is Chaperone protein DnaK.